The chain runs to 117 residues: Large ribosomal subunit protein bL20c (117 aa).

The protein belongs to the bacterial ribosomal protein bL20 family.

It localises to the plastid. It is found in the chloroplast. Its function is as follows. Binds directly to 23S ribosomal RNA and is necessary for the in vitro assembly process of the 50S ribosomal subunit. It is not involved in the protein synthesizing functions of that subunit. The chain is Large ribosomal subunit protein bL20c from Citrus sinensis (Sweet orange).